A 676-amino-acid chain; its full sequence is DNA ligase (676 aa).

NAD(+) is bound by residues 35–39, 84–85, and E118; these read DYEFD and SL. Residue K120 is the N6-AMP-lysine intermediate of the active site. The NAD(+) site is built by R141, E184, K299, and K323. Zn(2+)-binding residues include C417, C420, C435, and C441. The 77-residue stretch at 600 to 676 folds into the BRCT domain; sequence LINRNFEGVN…ISEDEFNAML (77 aa).

This sequence belongs to the NAD-dependent DNA ligase family. LigA subfamily. Mg(2+) is required as a cofactor. Requires Mn(2+) as cofactor.

The catalysed reaction is NAD(+) + (deoxyribonucleotide)n-3'-hydroxyl + 5'-phospho-(deoxyribonucleotide)m = (deoxyribonucleotide)n+m + AMP + beta-nicotinamide D-nucleotide.. Functionally, DNA ligase that catalyzes the formation of phosphodiester linkages between 5'-phosphoryl and 3'-hydroxyl groups in double-stranded DNA using NAD as a coenzyme and as the energy source for the reaction. It is essential for DNA replication and repair of damaged DNA. The chain is DNA ligase from Chlorobium phaeobacteroides (strain DSM 266 / SMG 266 / 2430).